The chain runs to 335 residues: Probable phosphoglycerate mutase ARB_03491 (335 aa).

The N-terminal stretch at 1–24 (MAGRILLGLTLLATSLPLLAMGDA) is a signal peptide. The Tele-phosphohistidine intermediate role is filled by His108. Glu211 functions as the Proton donor/acceptor in the catalytic mechanism.

The protein belongs to the phosphoglycerate mutase family.

Its subcellular location is the secreted. Functionally, probable phosphomutase that may have a function related to the manipulation of phosphate groups on carbohydrates. This is Probable phosphoglycerate mutase ARB_03491 from Arthroderma benhamiae (strain ATCC MYA-4681 / CBS 112371) (Trichophyton mentagrophytes).